A 195-amino-acid chain; its full sequence is Probable nicotinate-nucleotide adenylyltransferase (195 aa).

The protein belongs to the NadD family.

The catalysed reaction is nicotinate beta-D-ribonucleotide + ATP + H(+) = deamido-NAD(+) + diphosphate. Its pathway is cofactor biosynthesis; NAD(+) biosynthesis; deamido-NAD(+) from nicotinate D-ribonucleotide: step 1/1. Functionally, catalyzes the reversible adenylation of nicotinate mononucleotide (NaMN) to nicotinic acid adenine dinucleotide (NaAD). In Mesorhizobium japonicum (strain LMG 29417 / CECT 9101 / MAFF 303099) (Mesorhizobium loti (strain MAFF 303099)), this protein is Probable nicotinate-nucleotide adenylyltransferase.